We begin with the raw amino-acid sequence, 423 residues long: D-tagatose-1,6-bisphosphate aldolase subunit GatZ (423 aa).

This sequence belongs to the GatZ/KbaZ family. GatZ subfamily. In terms of assembly, forms a complex with GatY.

Its pathway is carbohydrate metabolism; D-tagatose 6-phosphate degradation; D-glyceraldehyde 3-phosphate and glycerone phosphate from D-tagatose 6-phosphate: step 2/2. In terms of biological role, component of the tagatose-1,6-bisphosphate aldolase GatYZ that is required for full activity and stability of the Y subunit. Could have a chaperone-like function for the proper and stable folding of GatY. When expressed alone, GatZ does not show any aldolase activity. Is involved in the catabolism of galactitol. The polypeptide is D-tagatose-1,6-bisphosphate aldolase subunit GatZ (Salmonella gallinarum (strain 287/91 / NCTC 13346)).